The primary structure comprises 201 residues: Ras-related protein Rab-9B (201 aa).

Positions 18, 19, 20, 21, 22, 33, 34, 36, 38, and 39 each coordinate GTP. S21 lines the Mg(2+) pocket. The Switch 1 motif lies at 31–42 (KFDSQAFHTIGV). Position 34 is a phosphoserine (S34). Mg(2+)-binding residues include T39 and D62. The short motif at 64 to 78 (AGQERFKSLRTPFYR) is the Switch 2 element. Residues G65, N124, K125, A155, and K156 each contribute to the GTP site. 2 S-geranylgeranyl cysteine lipidation sites follow: C200 and C201.

It belongs to the small GTPase superfamily. Rab family. In terms of assembly, interacts (GTP-bound form) with SGSM1; the GDP-bound form has much lower affinity for SGSM1. The GTP-bound form but not the GDP-bound form interacts with HPS4 and the BLOC-3 complex (heterodimer of HPS1 and HPS4) but does not interact with HPS1 alone. Interacts (GTP-bound form) with NDE1. Mg(2+) is required as a cofactor. As to expression, ubiquitous.

It is found in the cell membrane. Its subcellular location is the cytoplasmic vesicle. The protein resides in the phagosome. The protein localises to the phagosome membrane. It catalyses the reaction GTP + H2O = GDP + phosphate + H(+). Its activity is regulated as follows. Regulated by guanine nucleotide exchange factors (GEFs) which promote the exchange of bound GDP for free GTP. Regulated by GTPase activating proteins (GAPs) which increase the GTP hydrolysis activity. Inhibited by GDP dissociation inhibitors (GDIs). Its function is as follows. The small GTPases Rab are key regulators of intracellular membrane trafficking, from the formation of transport vesicles to their fusion with membranes. Rabs cycle between an inactive GDP-bound form and an active GTP-bound form that is able to recruit to membranes different sets of downstream effectors directly responsible for vesicle formation, movement, tethering and fusion. RAB9B is involved in the transport of proteins between the endosomes and the trans Golgi network. May use NDE1/NDEL1 as an effector to interact with the dynein motor complex in order to control retrograde trafficking of RAB9-associated late endosomes to the TGN. The polypeptide is Ras-related protein Rab-9B (Homo sapiens (Human)).